We begin with the raw amino-acid sequence, 695 residues long: Putative ATP-dependent DNA helicase R568 (695 aa).

A UvrD-like helicase ATP-binding domain is found at 86–499; sequence KFSEEQIKYI…FRNEEIFDSN (414 aa). 107-114 provides a ligand contact to ATP; it reads ACAGSGKT.

The protein belongs to the helicase family. UvrD subfamily.

It catalyses the reaction Couples ATP hydrolysis with the unwinding of duplex DNA by translocating in the 3'-5' direction.. It carries out the reaction ATP + H2O = ADP + phosphate + H(+). Its function is as follows. ATP-dependent DNA helicase. This Acanthamoeba polyphaga mimivirus (APMV) protein is Putative ATP-dependent DNA helicase R568.